The primary structure comprises 328 residues: P2Y purinoceptor 6 (328 aa).

Residues 1-27 (MEQDNGTIQAPGLPPTTCVYREDFKRL) are Extracellular-facing. N-linked (GlcNAc...) asparagine glycosylation is present at Asn-5. The helical transmembrane segment at 28–48 (LLTPVYSVVLVVGLPLNICVI) threads the bilayer. The Cytoplasmic portion of the chain corresponds to 49–62 (AQICASRRTLTRSA). The helical transmembrane segment at 63–83 (VYTLNLALADLMYACSLPLLI) threads the bilayer. Residues 84-101 (YNYARGDHWPFGDLACRF) are Extracellular-facing. Cys-99 and Cys-177 are disulfide-bonded. A helical membrane pass occupies residues 102-122 (VRFLFYANLHGSILFLTCISF). Over 123 to 144 (QRYLGICHPLASWHKRGGRRAA) the chain is Cytoplasmic. Residues 145–165 (WVVCGVVWLAVTAQCLPTAVF) traverse the membrane as a helical segment. Residues 166 to 194 (AATGIQRNRTVCYDLSPPILSTRYLPYGM) lie on the Extracellular side of the membrane. Asn-173 carries an N-linked (GlcNAc...) asparagine glycan. A helical transmembrane segment spans residues 195 to 215 (ALTVIGFLLPFIALLACYCRM). Over 216 to 236 (ARRLCRQDGPAGPVAQERRSK) the chain is Cytoplasmic. A helical transmembrane segment spans residues 237–257 (AARMAVVVAAVFAISFLPFHI). At 258–280 (TKTAYLAVRSTPGVSCPVLETFA) the chain is on the extracellular side. The helical transmembrane segment at 281-303 (AAYKGTRPFASVNSVLDPILFYF) threads the bilayer. Over 304-328 (TQQKFRRQPHDLLQRLTAKWQRQRV) the chain is Cytoplasmic.

The protein belongs to the G-protein coupled receptor 1 family.

It localises to the cell membrane. Functionally, receptor for extracellular UTP &gt; ADP = 2-methylthio-ATP &gt; ADP-beta-S &gt; ATP = ATP-gamma-S. The activity of this receptor is mediated by G proteins which activate a phosphatidylinositol-calcium second messenger system. Functionally coupled to phospholipase C. The protein is P2Y purinoceptor 6 (P2ry6) of Mus musculus (Mouse).